A 384-amino-acid chain; its full sequence is MTNAIDELQAIIAELKTEVEEQRAVIRQSRDRIEHMSAEVRMNIVKNYERIRDKTVAIVGVGGVGSVTADMLTRCGIGKLILFDYDKVELANMNRLFFTPDQAGLSKVEAAARTLTFINPDVRIETHNYNITTIDNFDNFLNTITGDGTVAGEPVDLVLSCVDNFEARMAINAACNEKCLNWFESGVSENAVSGHIQFLRPGDTACFACAPPLVVAENIDEKTLKREGVCAASLPTTMGITAGFLVQNALKYLLNFGEVSDYLGYNALNDFFPKMTLKPNPQCDDRNCLLRQKEFQARPKPVVVQEEAPTDEPLHASNDWGIELVAEDAPSNAPTDLSQSTDVGQGLRLAYEAPEKSSAEATQAATAPVDDTSLEDLMAQMKSM.

Residues Gly-63, Asp-84, Lys-107, Asn-130, and Asn-164 each coordinate ATP. Residues Cys-206 and Cys-209 each contribute to the Zn(2+) site. Cys-230 (glycyl thioester intermediate) is an active-site residue. Residues Cys-283 and Cys-288 each contribute to the Zn(2+) site. A disordered region spans residues 352 to 375 (EAPEKSSAEATQAATAPVDDTSLE).

It belongs to the ubiquitin-activating E1 family. UBA5 subfamily.

In terms of biological role, E1-like enzyme which activates UFM1. The chain is Ubiquitin-like modifier-activating enzyme 5 from Drosophila persimilis (Fruit fly).